Consider the following 289-residue polypeptide: Tachykinins (289 aa).

A signal peptide spans 1–24 (MRPLSGLIALALLLLLLLTAPSSA). Residues 24–94 (AADTETESSG…DEEADSSYAE (71 aa)) form a disordered region. The propeptide occupies 25–47 (ADTETESSGSPLTPGAEEPRRVV). Arg59 carries the post-translational modification Arginine amide. Residues 60–69 (GKKDEEHDTS) show a composition bias toward basic and acidic residues. Asn95 is modified (asparagine amide). An Arginine amide modification is found at Arg110. Val153 is subject to Valine amide. Arginine amide is present on residues Arg165, Arg200, Arg239, and Arg281. A propeptide spanning residues 285–289 (PALFE) is cleaved from the precursor.

The protein belongs to the tachykinin family. Strong expression is seen in a group of 14 cells plus one isolated cell in the midgut of stage 17 embryos. Also expressed in a pair of medially located unidentified cells, just posterior to the brain, and in two lateral groups of cells that may be associated with tracheae. Expression in the larval gut is restricted to cells with endocrine cell-like morphology in the posterior midgut, just anterior to the malphigian tubules. In the brain, expression is detected in a restricted number of neuronal cell bodies. Expression in the adult female gut is restricted to the midgut with no expression detected in the hindgut.

Its subcellular location is the secreted. In terms of biological role, tachykinins are active peptides which excite neurons, evoke behavioral responses, are potent vasodilators and secretagogues, and contract (directly or indirectly) many smooth muscles. Stimulates gut muscle contractions. Required for the response to the male sex pheromone CH503 which is transferred from males to females during mating and inhibits courtship behavior by other males. The Gr68a gustatory receptor is required for detection of the pheromone and Gr68a-expressing neurons in the male foreleg relay signals to the suboesophageal zone (SEZ) which leads to courtship suppression through release of tachykinin from a cluster of 8-10 neurons in the SEZ. The polypeptide is Tachykinins (Drosophila melanogaster (Fruit fly)).